A 467-amino-acid chain; its full sequence is Asparagine--tRNA ligase (467 aa).

It belongs to the class-II aminoacyl-tRNA synthetase family. In terms of assembly, homodimer.

It localises to the cytoplasm. It carries out the reaction tRNA(Asn) + L-asparagine + ATP = L-asparaginyl-tRNA(Asn) + AMP + diphosphate + H(+). The chain is Asparagine--tRNA ligase from Histophilus somni (strain 129Pt) (Haemophilus somnus).